Consider the following 629-residue polypeptide: Chaperone protein HtpG (629 aa).

The segment at 1–337 (MAASKETMQF…SSDLPLNVSR (337 aa)) is a; substrate-binding. The interval 338 to 554 (EILQGNRVID…ERDMALYMQQ (217 aa)) is b. Residues 555–629 (LLKQAGHEIS…INQLMLALAG (75 aa)) are c.

Belongs to the heat shock protein 90 family. As to quaternary structure, homodimer.

Its subcellular location is the cytoplasm. Functionally, molecular chaperone. Has ATPase activity. The polypeptide is Chaperone protein HtpG (Acidithiobacillus ferrooxidans (strain ATCC 23270 / DSM 14882 / CIP 104768 / NCIMB 8455) (Ferrobacillus ferrooxidans (strain ATCC 23270))).